A 1241-amino-acid polypeptide reads, in one-letter code: Putative ABC transporter B family member 8 (1241 aa).

A helical membrane pass occupies residues 24–44; that stretch reads FADWIDIVLMVLGSVGAIGDG. Residues 33-323 enclose the ABC transmembrane type-1 1 domain; it reads MVLGSVGAIG…ALTEIRYFSE (291 aa). N48 carries N-linked (GlcNAc...) asparagine glycosylation. The next 5 membrane-spanning stretches (helical) occupy residues 82–102, 157–177, 183–203, 263–283, and 297–317; these read LYFVYLGLAILGVAFMEGYCW, VPIFLMHISVFITGLVFSAYF, VVAIPTLVLLLIPGLIYGKYL, GLAVGSSGISFTIWAFLAWYG, and IYAAGISFVLGGISLGTALTE. Residues 360-596 form the ABC transporter 1 domain; that stretch reads VEFERVTLVY…NNHYAKLVKL (237 aa). 395–402 lines the ATP pocket; sequence GASGSGKS. N571, N632, and N648 each carry an N-linked (GlcNAc...) asparagine glycan. Positions 676-964 constitute an ABC transmembrane type-1 2 domain; it reads SLVGCISATT…AGSMTSDLAK (289 aa). The next 2 membrane-spanning stretches (helical) occupy residues 686-706 and 716-736; these read FGAIQPVYALSIGGMISAFFA and IHIYSLIFISLTFLSITLNLL. A glycan (N-linked (GlcNAc...) asparagine) is linked at N773. Transmembrane regions (helical) follow at residues 797–815 and 821–838; these read ISLLVQTISGVTIAMIIGL and LALVMIAVQPLSILCFYT. N855 carries N-linked (GlcNAc...) asparagine glycosylation. 2 consecutive transmembrane segments (helical) span residues 899-919 and 933-953; these read AWLAGFGMGSAQCLTFLTWAL and ISAGDVFKTFFVLVSTGKVIA. The ABC transporter 2 domain occupies 998–1236; sequence IELKNIDFSY…GGQFSRLAHA (239 aa). Residue 1033-1040 participates in ATP binding; that stretch reads GTSGCGKS. A glycan (N-linked (GlcNAc...) asparagine) is linked at N1187.

It belongs to the ABC transporter superfamily. ABCB family. Multidrug resistance exporter (TC 3.A.1.201) subfamily.

The protein resides in the membrane. The chain is Putative ABC transporter B family member 8 (ABCB8) from Arabidopsis thaliana (Mouse-ear cress).